We begin with the raw amino-acid sequence, 273 residues long: 2,3,4,5-tetrahydropyridine-2,6-dicarboxylate N-succinyltransferase (273 aa).

Substrate is bound by residues R104 and D141.

This sequence belongs to the transferase hexapeptide repeat family. In terms of assembly, homotrimer.

Its subcellular location is the cytoplasm. The catalysed reaction is (S)-2,3,4,5-tetrahydrodipicolinate + succinyl-CoA + H2O = (S)-2-succinylamino-6-oxoheptanedioate + CoA. It participates in amino-acid biosynthesis; L-lysine biosynthesis via DAP pathway; LL-2,6-diaminopimelate from (S)-tetrahydrodipicolinate (succinylase route): step 1/3. The sequence is that of 2,3,4,5-tetrahydropyridine-2,6-dicarboxylate N-succinyltransferase from Neisseria meningitidis serogroup A / serotype 4A (strain DSM 15465 / Z2491).